We begin with the raw amino-acid sequence, 163 residues long: Regulatory protein RecX (163 aa).

A disordered region spans residues 1 to 21; sequence MSDAEDIPTGRKRRPREQTPV.

This sequence belongs to the RecX family.

The protein localises to the cytoplasm. Modulates RecA activity. This chain is Regulatory protein RecX, found in Stenotrophomonas maltophilia (strain R551-3).